Here is a 240-residue protein sequence, read N- to C-terminus: UDP-2,3-diacylglucosamine hydrolase (240 aa).

Residues aspartate 8, histidine 10, aspartate 41, asparagine 79, and histidine 114 each contribute to the Mn(2+) site. Asparagine 79–arginine 80 is a binding site for substrate. The substrate site is built by aspartate 122, serine 160, asparagine 164, lysine 167, and histidine 195. Mn(2+) is bound by residues histidine 195 and histidine 197.

The protein belongs to the LpxH family. Mn(2+) serves as cofactor.

The protein resides in the cell inner membrane. The enzyme catalyses UDP-2-N,3-O-bis[(3R)-3-hydroxytetradecanoyl]-alpha-D-glucosamine + H2O = 2-N,3-O-bis[(3R)-3-hydroxytetradecanoyl]-alpha-D-glucosaminyl 1-phosphate + UMP + 2 H(+). Its pathway is glycolipid biosynthesis; lipid IV(A) biosynthesis; lipid IV(A) from (3R)-3-hydroxytetradecanoyl-[acyl-carrier-protein] and UDP-N-acetyl-alpha-D-glucosamine: step 4/6. In terms of biological role, hydrolyzes the pyrophosphate bond of UDP-2,3-diacylglucosamine to yield 2,3-diacylglucosamine 1-phosphate (lipid X) and UMP by catalyzing the attack of water at the alpha-P atom. Involved in the biosynthesis of lipid A, a phosphorylated glycolipid that anchors the lipopolysaccharide to the outer membrane of the cell. The chain is UDP-2,3-diacylglucosamine hydrolase from Salmonella newport (strain SL254).